Consider the following 297-residue polypeptide: Light-independent protochlorophyllide reductase iron-sulfur ATP-binding protein (297 aa).

ATP is bound by residues 41 to 46 and Lys70; that span reads GIGKST. Ser45 provides a ligand contact to Mg(2+). Positions 126 and 160 each coordinate [4Fe-4S] cluster. ATP-binding positions include 211–212 and 235–237; these read NR and PDL.

Belongs to the NifH/BchL/ChlL family. In terms of assembly, homodimer. Protochlorophyllide reductase is composed of three subunits; BchL, BchN and BchB. [4Fe-4S] cluster serves as cofactor.

It catalyses the reaction chlorophyllide a + oxidized 2[4Fe-4S]-[ferredoxin] + 2 ADP + 2 phosphate = protochlorophyllide a + reduced 2[4Fe-4S]-[ferredoxin] + 2 ATP + 2 H2O. It functions in the pathway porphyrin-containing compound metabolism; bacteriochlorophyll biosynthesis (light-independent). Its function is as follows. Component of the dark-operative protochlorophyllide reductase (DPOR) that uses Mg-ATP and reduced ferredoxin to reduce ring D of protochlorophyllide (Pchlide) to form chlorophyllide a (Chlide). This reaction is light-independent. The L component serves as a unique electron donor to the NB-component of the complex, and binds Mg-ATP. The polypeptide is Light-independent protochlorophyllide reductase iron-sulfur ATP-binding protein (Methylorubrum extorquens (strain PA1) (Methylobacterium extorquens)).